Here is a 397-residue protein sequence, read N- to C-terminus: 2,3-bisphosphoglycerate-independent phosphoglycerate mutase (397 aa).

The protein belongs to the BPG-independent phosphoglycerate mutase family. A-PGAM subfamily.

It catalyses the reaction (2R)-2-phosphoglycerate = (2R)-3-phosphoglycerate. It functions in the pathway carbohydrate degradation; glycolysis; pyruvate from D-glyceraldehyde 3-phosphate: step 3/5. Its function is as follows. Catalyzes the interconversion of 2-phosphoglycerate and 3-phosphoglycerate. This chain is 2,3-bisphosphoglycerate-independent phosphoglycerate mutase (apgM), found in Methanosarcina mazei (strain ATCC BAA-159 / DSM 3647 / Goe1 / Go1 / JCM 11833 / OCM 88) (Methanosarcina frisia).